A 122-amino-acid chain; its full sequence is MARIAGVNIPTNKRLVIALQYIHGIGEKFAHKIIEKVGIPAERRVHELSDSEILQIRETIDRDYQVEGDLRREVAMSVKRLMDLGCYRGLRHRRSLPVRGQRTHTNARTRKGPARAIAGKKK.

The segment at 97 to 122 (PVRGQRTHTNARTRKGPARAIAGKKK) is disordered.

It belongs to the universal ribosomal protein uS13 family. Part of the 30S ribosomal subunit. Forms a loose heterodimer with protein S19. Forms two bridges to the 50S subunit in the 70S ribosome.

Located at the top of the head of the 30S subunit, it contacts several helices of the 16S rRNA. In the 70S ribosome it contacts the 23S rRNA (bridge B1a) and protein L5 of the 50S subunit (bridge B1b), connecting the 2 subunits; these bridges are implicated in subunit movement. Contacts the tRNAs in the A and P-sites. The polypeptide is Small ribosomal subunit protein uS13 (Bartonella bacilliformis (strain ATCC 35685 / KC583 / Herrer 020/F12,63)).